A 410-amino-acid chain; its full sequence is WD repeat and FYVE domain-containing protein 1 (410 aa).

WD repeat units lie at residues 22–61 (GHQD…QYWP), 66–105 (TMAS…NKMN), 112–150 (AHQN…NMLG), 153–192 (FFSS…CSVI), 197–236 (GHEG…GRTL), and 240–279 (GHHD…EEAP). The FYVE-type zinc-finger motif lies at 281–352 (WLESDSCQKC…VCDSCYDSIK (72 aa)). 8 residues coordinate Zn(2+): Cys287, Cys290, Cys314, Cys317, Cys322, Cys325, Cys344, and Cys347. One copy of the WD 7 repeat lies at 364 to 403 (EGKHNISHMSMDVARGLMVTCGTDRVVKIWDMTPVVGCSL). Ser408 carries the post-translational modification Phosphoserine.

In terms of assembly, binds PtdIns3P in vitro with high specificity over other phosphoinositides. Interacts (via WD repeat 2) with tyrosine-phosphorylated TLR3 (via TIR domain) in response to poly(I:C). Interacts with TLR4 in response to LPS. Interacts with TICAM1 in response to poly(I:C).

The protein resides in the early endosome. Its function is as follows. Positively regulates TLR3- and TLR4-mediated signaling pathways by bridging the interaction between TLR3 or TLR4 and TICAM1. Promotes TLR3/4 ligand-induced activation of transcription factors IRF3 and NF-kappa-B, as well as the production of IFN-beta and inflammatory cytokines. In Bos taurus (Bovine), this protein is WD repeat and FYVE domain-containing protein 1 (WDFY1).